Here is a 190-residue protein sequence, read N- to C-terminus: Xanthine phosphoribosyltransferase (190 aa).

Residues Leu20 and Asn27 each contribute to the xanthine site. A 5-phospho-alpha-D-ribose 1-diphosphate-binding site is contributed by 129 to 133 (ANGRA). Position 157 (Lys157) interacts with xanthine.

Belongs to the purine/pyrimidine phosphoribosyltransferase family. Xpt subfamily. In terms of assembly, homodimer.

It is found in the cytoplasm. The enzyme catalyses XMP + diphosphate = xanthine + 5-phospho-alpha-D-ribose 1-diphosphate. Its pathway is purine metabolism; XMP biosynthesis via salvage pathway; XMP from xanthine: step 1/1. Converts the preformed base xanthine, a product of nucleic acid breakdown, to xanthosine 5'-monophosphate (XMP), so it can be reused for RNA or DNA synthesis. This Clostridioides difficile (strain 630) (Peptoclostridium difficile) protein is Xanthine phosphoribosyltransferase.